The primary structure comprises 461 residues: MEYSRKTYLDLNIMAKYILILSLFFGPGLSWDVFYSGDEDQLSLARERRAANYNPSPHMSTWERNEIQQEILNILGLQHRPRPPSLRGGQNQFCAQFTEWSYYRTLNIDEQSGHPSETEPQPGGLASNAIYNSPDSSGIGSVMSGTVFNYTRNEVQAVSQADTIMSLPVHYKDAAIEDTEHRYRFDIGRIPQGETVTSAELRVFRDAGRQGRSLYRIDVLLLRERGSDGSRSPVYLDSTIVGAGDHGWLVFDMTSATSTWRSYPGANVGLQLRVESLQGLNIDPTDAGVVGVGNNEGREPFMVVFFQRNEEVIATNSHLRRNRRAATRQKKGGKRPRKPDTDNDIASRDSASSLNSDWQCKRKNLFVNFEDLDWQEWIIAPLGYVAFYCQGECAFPLNGHANATNHAIVQTLVHHMSPSHVPQPCCAPTKLSPITVLYYDDSRNVVLKKYKNMVVRACGCL.

An N-terminal signal peptide occupies residues 1–30; the sequence is MEYSRKTYLDLNIMAKYILILSLFFGPGLS. Residues 31 to 338 constitute a propeptide that is removed on maturation; the sequence is WDVFYSGDED…QKKGGKRPRK (308 aa). Asn-149 carries an N-linked (GlcNAc...) asparagine glycan. A disordered region spans residues 317–351; that stretch reads SHLRRNRRAATRQKKGGKRPRKPDTDNDIASRDSA. A compositionally biased stretch (basic residues) spans 318-337; sequence HLRRNRRAATRQKKGGKRPR. Residues 338 to 347 show a composition bias toward basic and acidic residues; that stretch reads KPDTDNDIAS. 3 cysteine pairs are disulfide-bonded: Cys-360/Cys-426, Cys-389/Cys-458, and Cys-393/Cys-460. Asn-402 carries N-linked (GlcNAc...) asparagine glycosylation.

The protein belongs to the TGF-beta family. As to quaternary structure, homodimer; disulfide-linked.

It localises to the secreted. This Strongylocentrotus purpuratus (Purple sea urchin) protein is Protein DVR-1 homolog (DVR1).